We begin with the raw amino-acid sequence, 346 residues long: MHISAPHFWWKNKSFLRFLLAPISWGYGYFSCRFMGRQPPVIDLPVLCIGNFTCGGTGKTPVVIAFAKVAKELGFVPGVVSRGYGGAVKGVHLVNEKYDTARDVGDEALLLAQHAFVAVSANRYAAAQRLKKEGCNLILMDDGFQSRRLYMDYTLLVVDAMRGFGNGAVFPAGPLRVPLKTQFSFMDSVLLIGHSDARDNVSFLIARTGKPLHRAHLKARASDEVAGKSFLAFAGIGNPDKFFQSIKELSGHVVQTYTYPDHYFFTDKNLTSLVQKAQMYNLWLATTAKDYIRIQTIHERKDLKNLIVFDVDVDFVQKDFCRMLLEEVITRFRKRSCEFSCAKGKG.

53–60 (TCGGTGKT) contributes to the ATP binding site.

This sequence belongs to the LpxK family.

The catalysed reaction is a lipid A disaccharide + ATP = a lipid IVA + ADP + H(+). The protein operates within glycolipid biosynthesis; lipid IV(A) biosynthesis; lipid IV(A) from (3R)-3-hydroxytetradecanoyl-[acyl-carrier-protein] and UDP-N-acetyl-alpha-D-glucosamine: step 6/6. Functionally, transfers the gamma-phosphate of ATP to the 4'-position of a tetraacyldisaccharide 1-phosphate intermediate (termed DS-1-P) to form tetraacyldisaccharide 1,4'-bis-phosphate (lipid IVA). The protein is Tetraacyldisaccharide 4'-kinase of Bartonella tribocorum (strain CIP 105476 / IBS 506).